The sequence spans 332 residues: Methionyl-tRNA formyltransferase (332 aa).

114-117 (SLLP) provides a ligand contact to (6S)-5,6,7,8-tetrahydrofolate.

The protein belongs to the Fmt family.

It catalyses the reaction L-methionyl-tRNA(fMet) + (6R)-10-formyltetrahydrofolate = N-formyl-L-methionyl-tRNA(fMet) + (6S)-5,6,7,8-tetrahydrofolate + H(+). In terms of biological role, attaches a formyl group to the free amino group of methionyl-tRNA(fMet). The formyl group appears to play a dual role in the initiator identity of N-formylmethionyl-tRNA by promoting its recognition by IF2 and preventing the misappropriation of this tRNA by the elongation apparatus. This Corynebacterium aurimucosum (strain ATCC 700975 / DSM 44827 / CIP 107346 / CN-1) (Corynebacterium nigricans) protein is Methionyl-tRNA formyltransferase.